The sequence spans 724 residues: Probable metal-nicotianamine transporter YSL8 (724 aa).

Residues 1–58 (MRKGGLTPDRDRQIEEHELQETGISPDIERLKRNINATPYQREEEEEDREEQEESVEG) are disordered. A compositionally biased stretch (basic and acidic residues) spans 8–20 (PDRDRQIEEHELQ). Serine 25 carries the post-translational modification Phosphoserine. Residues 43 to 56 (EEEEEDREEQEESV) show a composition bias toward acidic residues. Transmembrane regions (helical) follow at residues 72 to 92 (LTIR…FIVM), 96 to 116 (LTTG…FFFV), 144 to 164 (CVVA…LFAM), 184 to 204 (LGWM…SVVP), 245 to 265 (VLGK…FFTA), 304 to 324 (IINI…WPLI), and 349 to 369 (VFIA…KVLI). A disordered region spans residues 386 to 407 (RSSLAHKEDPPASPASPLTPRI). 8 consecutive transmembrane segments (helical) span residues 423–443 (IPSW…TAIL), 455–475 (IIVI…GAGL), 478–497 (WSLA…AWAG), 501–520 (GGLL…VSTA), 541–561 (FVSQ…VFWL), 603–623 (LMLC…KDCL), 641–661 (FFLG…LFVW), and 679–699 (GLIC…IAGV).

The protein belongs to the YSL (TC 2.A.67.2) family.

The protein localises to the membrane. May be involved in the transport of nicotianamine-chelated metals. This chain is Probable metal-nicotianamine transporter YSL8 (YSL8), found in Arabidopsis thaliana (Mouse-ear cress).